We begin with the raw amino-acid sequence, 155 residues long: Ribonuclease H (155 aa).

The 142-residue stretch at 1–142 folds into the RNase H type-1 domain; sequence MTKQVEIFTD…CDELARAAAM (142 aa). The Mg(2+) site is built by D10, E48, D70, and D134.

Belongs to the RNase H family. Monomer. Mg(2+) serves as cofactor.

The protein localises to the cytoplasm. It catalyses the reaction Endonucleolytic cleavage to 5'-phosphomonoester.. Its function is as follows. Endonuclease that specifically degrades the RNA of RNA-DNA hybrids. The chain is Ribonuclease H from Enterobacter sp. (strain 638).